The following is a 239-amino-acid chain: BURP domain-containing protein 6 (239 aa).

Residues 1 to 19 form the signal peptide; the sequence is MPGAIRDLINPVSSAASAS. Residues 28–239 enclose the BURP domain; sequence FFLEKDLFPG…PQDDMLWVRN (212 aa).

As to expression, expressed in leaves and shoot.

This is BURP domain-containing protein 6 (BURP6) from Oryza sativa subsp. japonica (Rice).